A 137-amino-acid chain; its full sequence is Competence protein D (137 aa).

Functionally, involved in transformation (genetic competence for DNA uptake). The polypeptide is Competence protein D (comD) (Haemophilus influenzae (strain ATCC 51907 / DSM 11121 / KW20 / Rd)).